Here is a 130-residue protein sequence, read N- to C-terminus: Small ribosomal subunit protein uS9 (130 aa).

Residues arginine 109–arginine 130 form a disordered region.

It belongs to the universal ribosomal protein uS9 family.

This is Small ribosomal subunit protein uS9 from Oleidesulfovibrio alaskensis (strain ATCC BAA-1058 / DSM 17464 / G20) (Desulfovibrio alaskensis).